A 190-amino-acid polypeptide reads, in one-letter code: Spermatogenesis-associated protein 12 (190 aa).

In terms of tissue distribution, expressed in testis.

The protein is Spermatogenesis-associated protein 12 (SPATA12) of Homo sapiens (Human).